Here is a 232-residue protein sequence, read N- to C-terminus: Phosphoribosylformylglycinamidine synthase subunit PurQ (232 aa).

One can recognise a Glutamine amidotransferase type-1 domain in the interval 2–232 (KIAIIQFGGT…SMADYITENF (231 aa)). The active-site Nucleophile is the Cys86. Active-site residues include His203 and Glu205.

Part of the FGAM synthase complex composed of 1 PurL, 1 PurQ and 2 PurS subunits.

The protein resides in the cytoplasm. It carries out the reaction N(2)-formyl-N(1)-(5-phospho-beta-D-ribosyl)glycinamide + L-glutamine + ATP + H2O = 2-formamido-N(1)-(5-O-phospho-beta-D-ribosyl)acetamidine + L-glutamate + ADP + phosphate + H(+). The catalysed reaction is L-glutamine + H2O = L-glutamate + NH4(+). It functions in the pathway purine metabolism; IMP biosynthesis via de novo pathway; 5-amino-1-(5-phospho-D-ribosyl)imidazole from N(2)-formyl-N(1)-(5-phospho-D-ribosyl)glycinamide: step 1/2. In terms of biological role, part of the phosphoribosylformylglycinamidine synthase complex involved in the purines biosynthetic pathway. Catalyzes the ATP-dependent conversion of formylglycinamide ribonucleotide (FGAR) and glutamine to yield formylglycinamidine ribonucleotide (FGAM) and glutamate. The FGAM synthase complex is composed of three subunits. PurQ produces an ammonia molecule by converting glutamine to glutamate. PurL transfers the ammonia molecule to FGAR to form FGAM in an ATP-dependent manner. PurS interacts with PurQ and PurL and is thought to assist in the transfer of the ammonia molecule from PurQ to PurL. This Methanosarcina acetivorans (strain ATCC 35395 / DSM 2834 / JCM 12185 / C2A) protein is Phosphoribosylformylglycinamidine synthase subunit PurQ.